The chain runs to 247 residues: Carboxy-S-adenosyl-L-methionine synthase (247 aa).

S-adenosyl-L-methionine is bound by residues Tyr40, 65 to 67 (GCS), 90 to 91 (DN), 122 to 123 (DI), Asn137, and Arg204.

Belongs to the class I-like SAM-binding methyltransferase superfamily. Cx-SAM synthase family. Homodimer.

The enzyme catalyses prephenate + S-adenosyl-L-methionine = carboxy-S-adenosyl-L-methionine + 3-phenylpyruvate + H2O. In terms of biological role, catalyzes the conversion of S-adenosyl-L-methionine (SAM) to carboxy-S-adenosyl-L-methionine (Cx-SAM). This chain is Carboxy-S-adenosyl-L-methionine synthase, found in Pseudomonas syringae pv. tomato (strain ATCC BAA-871 / DC3000).